Reading from the N-terminus, the 184-residue chain is DOMON domain-containing protein CBG21755 (184 aa).

The signal sequence occupies residues 1–20 (MIVPISLLFLFLSFVPFSYS). Residues 28–145 (EVASMSWMVK…CVNWIVVPGG (118 aa)) enclose the DOMON domain. Asn49 carries an N-linked (GlcNAc...) asparagine glycan.

It is found in the secreted. This is DOMON domain-containing protein CBG21755 from Caenorhabditis briggsae.